Consider the following 363-residue polypeptide: Flagellar P-ring protein (363 aa).

A signal peptide spans 1 to 20 (MKLKLILAVAMLAFSLPSQA).

It belongs to the FlgI family. In terms of assembly, the basal body constitutes a major portion of the flagellar organelle and consists of four rings (L,P,S, and M) mounted on a central rod.

It localises to the periplasm. The protein localises to the bacterial flagellum basal body. In terms of biological role, assembles around the rod to form the L-ring and probably protects the motor/basal body from shearing forces during rotation. The protein is Flagellar P-ring protein of Shewanella sp. (strain MR-4).